Reading from the N-terminus, the 145-residue chain is Large ribosomal subunit protein uL16 (145 aa).

Residues 1–21 (MLVPTRVKHRKQHRGRMHGKA) show a composition bias toward basic residues. The disordered stretch occupies residues 1–22 (MLVPTRVKHRKQHRGRMHGKAT).

The protein belongs to the universal ribosomal protein uL16 family. As to quaternary structure, part of the 50S ribosomal subunit.

Binds 23S rRNA and is also seen to make contacts with the A and possibly P site tRNAs. The polypeptide is Large ribosomal subunit protein uL16 (Desulfitobacterium hafniense (strain Y51)).